The sequence spans 473 residues: Bifunctional protein GlmU (473 aa).

Positions 1–226 are pyrophosphorylase; sequence MRAPVAVVIL…AGEASGINDL (226 aa). UDP-N-acetyl-alpha-D-glucosamine-binding positions include 10–13, lysine 24, glutamine 75, 80–81, 102–104, glycine 136, glutamate 151, asparagine 166, and asparagine 224; these read LAAG, GT, and YGD. Aspartate 104 is a Mg(2+) binding site. A Mg(2+)-binding site is contributed by asparagine 224. The linker stretch occupies residues 227-247; sequence VQLAEVEEAFQRRWARRLLQG. The tract at residues 248–473 is N-acetyltransferase; it reads GLRLVAPHRF…TPASGGAKEE (226 aa). 2 residues coordinate UDP-N-acetyl-alpha-D-glucosamine: arginine 330 and lysine 348. Histidine 360 serves as the catalytic Proton acceptor. Residues tyrosine 363 and asparagine 374 each coordinate UDP-N-acetyl-alpha-D-glucosamine. Acetyl-CoA is bound by residues alanine 377, 383-384, serine 402, alanine 420, and arginine 437; that span reads NY. The interval 439–473 is disordered; that stretch reads RARTIPGWQHPGLTGRRGPPDDNDATPASGGAKEE.

This sequence in the N-terminal section; belongs to the N-acetylglucosamine-1-phosphate uridyltransferase family. In the C-terminal section; belongs to the transferase hexapeptide repeat family. In terms of assembly, homotrimer. Mg(2+) is required as a cofactor.

It is found in the cytoplasm. It carries out the reaction alpha-D-glucosamine 1-phosphate + acetyl-CoA = N-acetyl-alpha-D-glucosamine 1-phosphate + CoA + H(+). It catalyses the reaction N-acetyl-alpha-D-glucosamine 1-phosphate + UTP + H(+) = UDP-N-acetyl-alpha-D-glucosamine + diphosphate. Its pathway is nucleotide-sugar biosynthesis; UDP-N-acetyl-alpha-D-glucosamine biosynthesis; N-acetyl-alpha-D-glucosamine 1-phosphate from alpha-D-glucosamine 6-phosphate (route II): step 2/2. It participates in nucleotide-sugar biosynthesis; UDP-N-acetyl-alpha-D-glucosamine biosynthesis; UDP-N-acetyl-alpha-D-glucosamine from N-acetyl-alpha-D-glucosamine 1-phosphate: step 1/1. The protein operates within bacterial outer membrane biogenesis; LPS lipid A biosynthesis. Catalyzes the last two sequential reactions in the de novo biosynthetic pathway for UDP-N-acetylglucosamine (UDP-GlcNAc). The C-terminal domain catalyzes the transfer of acetyl group from acetyl coenzyme A to glucosamine-1-phosphate (GlcN-1-P) to produce N-acetylglucosamine-1-phosphate (GlcNAc-1-P), which is converted into UDP-GlcNAc by the transfer of uridine 5-monophosphate (from uridine 5-triphosphate), a reaction catalyzed by the N-terminal domain. The polypeptide is Bifunctional protein GlmU (Halorhodospira halophila (strain DSM 244 / SL1) (Ectothiorhodospira halophila (strain DSM 244 / SL1))).